The sequence spans 427 residues: 5-hydroxybenzimidazole synthase BzaB (427 aa).

The protein belongs to the ThiC family. 5-hydroxybenzimidazole synthase subfamily. [4Fe-4S] cluster is required as a cofactor.

The catalysed reaction is 5-amino-1-(5-phospho-beta-D-ribosyl)imidazole + AH2 + S-adenosyl-L-methionine = 5-hydroxybenzimidazole + 5'-deoxyadenosine + formate + L-methionine + A + NH4(+) + phosphate + 2 H(+). Its pathway is cofactor biosynthesis; adenosylcobalamin biosynthesis. Functionally, together with BzaA, catalyzes the conversion of aminoimidazole ribotide (AIR) to 5-hydroxybenzimidazole (5-HBI) in a radical S-adenosyl-L-methionine (SAM)-dependent reaction. Is thus involved in the anaerobic biosynthesis of dimethylbenzimidazole (DMB), the lower axial ligand of vitamin B12 (cobalamin). Requires BzaA for catalytic activity, as BzaB alone displays no activity. This is 5-hydroxybenzimidazole synthase BzaB from Eubacterium limosum.